The primary structure comprises 318 residues: Probable endolytic peptidoglycan transglycosylase RlpA (318 aa).

Residues 1–21 (MMDKRVVAVAAVLWNVQMLFA) form the signal peptide. A disordered region spans residues 121-191 (DPNAHASQQR…GVANTTDVPA (71 aa)). Residues 125-137 (HASQQRNDRQTSP) show a composition bias toward polar residues.

It belongs to the RlpA family.

In terms of biological role, lytic transglycosylase with a strong preference for naked glycan strands that lack stem peptides. This Treponema pallidum (strain Nichols) protein is Probable endolytic peptidoglycan transglycosylase RlpA.